The sequence spans 212 residues: Cytochrome c biogenesis ATP-binding export protein CcmA (212 aa).

The ABC transporter domain occupies 8–212 (LQATALACER…RSIDLAKGSA (205 aa)). Residue 40–47 (GPNGSGKT) participates in ATP binding.

Belongs to the ABC transporter superfamily. CcmA exporter (TC 3.A.1.107) family. The complex is composed of two ATP-binding proteins (CcmA) and two transmembrane proteins (CcmB).

The protein resides in the cell inner membrane. The enzyme catalyses heme b(in) + ATP + H2O = heme b(out) + ADP + phosphate + H(+). Functionally, part of the ABC transporter complex CcmAB involved in the biogenesis of c-type cytochromes; once thought to export heme, this seems not to be the case, but its exact role is uncertain. Responsible for energy coupling to the transport system. The protein is Cytochrome c biogenesis ATP-binding export protein CcmA of Pseudomonas syringae pv. tomato (strain ATCC BAA-871 / DC3000).